Reading from the N-terminus, the 233-residue chain is Translation initiation factor IF-3 (233 aa).

2 disordered regions span residues 1–21 and 184–233; these read MAIQ…RTNR and LQSQ…AAQR. Residues 193 to 211 are compositionally biased toward low complexity; sequence AAAAAAPAAAPAAPAAGAP. Over residues 212–223 the composition is skewed to pro residues; that stretch reads APAPAPAAPAPA. A compositionally biased stretch (low complexity) spans 224–233; it reads PAAADPAAQR.

This sequence belongs to the IF-3 family. As to quaternary structure, monomer.

It is found in the cytoplasm. Its function is as follows. IF-3 binds to the 30S ribosomal subunit and shifts the equilibrium between 70S ribosomes and their 50S and 30S subunits in favor of the free subunits, thus enhancing the availability of 30S subunits on which protein synthesis initiation begins. The polypeptide is Translation initiation factor IF-3 (Anaeromyxobacter dehalogenans (strain 2CP-C)).